The chain runs to 325 residues: Tetraacyldisaccharide 4'-kinase (325 aa).

Residue 55 to 62 (TAGGNGKT) participates in ATP binding.

It belongs to the LpxK family.

The catalysed reaction is a lipid A disaccharide + ATP = a lipid IVA + ADP + H(+). Its pathway is glycolipid biosynthesis; lipid IV(A) biosynthesis; lipid IV(A) from (3R)-3-hydroxytetradecanoyl-[acyl-carrier-protein] and UDP-N-acetyl-alpha-D-glucosamine: step 6/6. In terms of biological role, transfers the gamma-phosphate of ATP to the 4'-position of a tetraacyldisaccharide 1-phosphate intermediate (termed DS-1-P) to form tetraacyldisaccharide 1,4'-bis-phosphate (lipid IVA). The polypeptide is Tetraacyldisaccharide 4'-kinase (Salmonella heidelberg (strain SL476)).